The following is a 368-amino-acid chain: 1-deoxy-D-xylulose 5-phosphate reductoisomerase (368 aa).

Residues threonine 10, glycine 11, serine 12, isoleucine 13, glutamine 38, and asparagine 100 each contribute to the NADPH site. Lysine 101 provides a ligand contact to 1-deoxy-D-xylulose 5-phosphate. Glutamate 102 provides a ligand contact to NADPH. Aspartate 125 is a binding site for Mn(2+). Residues serine 126, glutamate 127, serine 151, and histidine 172 each coordinate 1-deoxy-D-xylulose 5-phosphate. Residue glutamate 127 participates in Mn(2+) binding. Glycine 178 lines the NADPH pocket. 1-deoxy-D-xylulose 5-phosphate is bound by residues serine 185, asparagine 190, lysine 191, and glutamate 194. Position 194 (glutamate 194) interacts with Mn(2+).

Belongs to the DXR family. Mg(2+) is required as a cofactor. The cofactor is Mn(2+).

It catalyses the reaction 2-C-methyl-D-erythritol 4-phosphate + NADP(+) = 1-deoxy-D-xylulose 5-phosphate + NADPH + H(+). It participates in isoprenoid biosynthesis; isopentenyl diphosphate biosynthesis via DXP pathway; isopentenyl diphosphate from 1-deoxy-D-xylulose 5-phosphate: step 1/6. Catalyzes the NADPH-dependent rearrangement and reduction of 1-deoxy-D-xylulose-5-phosphate (DXP) to 2-C-methyl-D-erythritol 4-phosphate (MEP). The protein is 1-deoxy-D-xylulose 5-phosphate reductoisomerase of Tropheryma whipplei (strain Twist) (Whipple's bacillus).